The primary structure comprises 79 residues: Dermaseptin-S8 (79 aa).

Residues 1–22 (MDILKKSLFLVLFLGLVSLSIC) form the signal peptide. Positions 23-45 (EEEKRENEDEEKQEDDEQSEMKR) are excised as a propeptide. A Glutamine amide modification is found at Q76. Residues 78 to 79 (AQ) constitute a propeptide that is removed on maturation.

Belongs to the frog skin active peptide (FSAP) family. Dermaseptin subfamily. Expressed by the skin glands.

Its subcellular location is the secreted. Functionally, potent antimicrobial peptide with activity against bacteria, fungi and protozoa. Probably acts by disturbing membrane functions with its amphipathic structure. This chain is Dermaseptin-S8, found in Phyllomedusa sauvagei (Sauvage's leaf frog).